Consider the following 403-residue polypeptide: Protein WVD2-like 6 (403 aa).

Disordered stretches follow at residues 1–179 (MDSE…ALPN) and 254–403 (LKKI…AVEP). A compositionally biased stretch (polar residues) spans 25–56 (GDSSNGNGGTSENLECCSTQHPMEASEGTQNE). The segment covering 103–118 (SVAPNVKPVKSPKSKS) has biased composition (low complexity). At S113 the chain carries Phosphoserine. 3 stretches are compositionally biased toward basic and acidic residues: residues 120–132 (NGRE…HGNH), 139–153 (GTRD…RKQV), and 162–171 (QYPKEDDGKP). Positions 263-273 (KSPKLGRKKTN) are enriched in basic residues. The span at 336 to 348 (KVAPAKAVTASTK) shows a compositional bias: low complexity. Residues 385-394 (VNEDRNESHM) show a composition bias toward basic and acidic residues.

Belongs to the TPX2 family. In terms of tissue distribution, expressed in seedlings.

It localises to the cytoplasm. It is found in the cytoskeleton. In terms of biological role, microtubule-associated protein (MAP) that regulates the orientation of interphase cortical microtubules. This is Protein WVD2-like 6 from Arabidopsis thaliana (Mouse-ear cress).